We begin with the raw amino-acid sequence, 338 residues long: tRNA N6-adenosine threonylcarbamoyltransferase (338 aa).

Residues H110 and H114 each coordinate Fe cation. Residues 132–136, D165, G178, and N274 contribute to the substrate site; that span reads ILSGG. Fe cation is bound at residue D298.

This sequence belongs to the KAE1 / TsaD family. Fe(2+) serves as cofactor.

The protein resides in the cytoplasm. It carries out the reaction L-threonylcarbamoyladenylate + adenosine(37) in tRNA = N(6)-L-threonylcarbamoyladenosine(37) in tRNA + AMP + H(+). Required for the formation of a threonylcarbamoyl group on adenosine at position 37 (t(6)A37) in tRNAs that read codons beginning with adenine. Is involved in the transfer of the threonylcarbamoyl moiety of threonylcarbamoyl-AMP (TC-AMP) to the N6 group of A37, together with TsaE and TsaB. TsaD likely plays a direct catalytic role in this reaction. This chain is tRNA N6-adenosine threonylcarbamoyltransferase, found in Borrelia hermsii (strain HS1 / DAH).